A 354-amino-acid polypeptide reads, in one-letter code: 3-isopropylmalate dehydrogenase (354 aa).

An NAD(+)-binding site is contributed by G74–E87. Residues R95, R105, R134, and D219 each coordinate substrate. Mg(2+)-binding residues include D219, D243, and D247. G275–N287 contributes to the NAD(+) binding site.

Belongs to the isocitrate and isopropylmalate dehydrogenases family. LeuB type 1 subfamily. As to quaternary structure, homodimer. Requires Mg(2+) as cofactor. Mn(2+) serves as cofactor.

It is found in the cytoplasm. It carries out the reaction (2R,3S)-3-isopropylmalate + NAD(+) = 4-methyl-2-oxopentanoate + CO2 + NADH. Its pathway is amino-acid biosynthesis; L-leucine biosynthesis; L-leucine from 3-methyl-2-oxobutanoate: step 3/4. Its function is as follows. Catalyzes the oxidation of 3-carboxy-2-hydroxy-4-methylpentanoate (3-isopropylmalate) to 3-carboxy-4-methyl-2-oxopentanoate. The product decarboxylates to 4-methyl-2 oxopentanoate. In Thermotoga maritima (strain ATCC 43589 / DSM 3109 / JCM 10099 / NBRC 100826 / MSB8), this protein is 3-isopropylmalate dehydrogenase (leuB).